A 185-amino-acid polypeptide reads, in one-letter code: Ribosome-recycling factor (185 aa).

The protein belongs to the RRF family.

The protein resides in the cytoplasm. Its function is as follows. Responsible for the release of ribosomes from messenger RNA at the termination of protein biosynthesis. May increase the efficiency of translation by recycling ribosomes from one round of translation to another. This is Ribosome-recycling factor from Mycobacteroides abscessus (strain ATCC 19977 / DSM 44196 / CCUG 20993 / CIP 104536 / JCM 13569 / NCTC 13031 / TMC 1543 / L948) (Mycobacterium abscessus).